We begin with the raw amino-acid sequence, 185 residues long: Cuticle protein 18.6, isoform A (185 aa).

7 repeat units span residues 21–24, 33–36, 41–44, 54–57, 133–136, 139–142, and 150–153. In terms of domain architecture, Chitin-binding type R&amp;R spans 64 to 134; sequence HPQYSFAYNV…KEAGAHPAAA (71 aa).

Component of the cuticle of migratory locust which contains more than 100 different structural proteins. This chain is Cuticle protein 18.6, isoform A, found in Locusta migratoria (Migratory locust).